Here is a 473-residue protein sequence, read N- to C-terminus: UDP-N-acetylmuramate--L-alanine ligase (473 aa).

ATP is bound at residue 115–121 (GTHGKTT).

It belongs to the MurCDEF family.

The protein resides in the cytoplasm. It carries out the reaction UDP-N-acetyl-alpha-D-muramate + L-alanine + ATP = UDP-N-acetyl-alpha-D-muramoyl-L-alanine + ADP + phosphate + H(+). It participates in cell wall biogenesis; peptidoglycan biosynthesis. Cell wall formation. This chain is UDP-N-acetylmuramate--L-alanine ligase, found in Rhizorhabdus wittichii (strain DSM 6014 / CCUG 31198 / JCM 15750 / NBRC 105917 / EY 4224 / RW1) (Sphingomonas wittichii).